The following is a 103-amino-acid chain: Small ribosomal subunit protein uS10 (103 aa).

Belongs to the universal ribosomal protein uS10 family. In terms of assembly, part of the 30S ribosomal subunit.

Involved in the binding of tRNA to the ribosomes. The polypeptide is Small ribosomal subunit protein uS10 (Rubrobacter xylanophilus (strain DSM 9941 / JCM 11954 / NBRC 16129 / PRD-1)).